We begin with the raw amino-acid sequence, 621 residues long: MAU2 chromatid cohesion factor homolog (621 aa).

3 TPR repeats span residues 96-129, 451-484, and 491-524; these read FDTA…SQNN, GGFY…ANAE, and SCSL…ASKI.

Belongs to the SCC4/mau-2 family. In terms of assembly, interacts with Nipped-B to form the cohesin loading complex.

It localises to the nucleus. It is found in the nucleoplasm. Its function is as follows. Required for association of the cohesin complex with chromatin during interphase. Plays a role in sister chromatid cohesion and normal progression through prometaphase. In Drosophila virilis (Fruit fly), this protein is MAU2 chromatid cohesion factor homolog.